A 456-amino-acid polypeptide reads, in one-letter code: Bifunctional protein GlmU (456 aa).

Residues 1–228 (MPQNTLNTVI…SHLAAGVNNK (228 aa)) are pyrophosphorylase. UDP-N-acetyl-alpha-D-glucosamine is bound by residues 11 to 14 (LAAG), lysine 25, glutamine 75, 80 to 81 (GT), 102 to 104 (YGD), glycine 138, glutamate 153, asparagine 168, and asparagine 226. Aspartate 104 is a Mg(2+) binding site. Asparagine 226 contributes to the Mg(2+) binding site. The linker stretch occupies residues 229 to 249 (RQLAELERIFQTEQAQELLKA). Positions 250 to 456 (GVTLRDPARF…GWVRPEKNKQ (207 aa)) are N-acetyltransferase. Residues arginine 332 and lysine 350 each coordinate UDP-N-acetyl-alpha-D-glucosamine. The Proton acceptor role is filled by histidine 362. UDP-N-acetyl-alpha-D-glucosamine contacts are provided by tyrosine 365 and asparagine 376. Residues alanine 379, 385–386 (NY), serine 404, alanine 422, and arginine 439 contribute to the acetyl-CoA site.

The protein in the N-terminal section; belongs to the N-acetylglucosamine-1-phosphate uridyltransferase family. In the C-terminal section; belongs to the transferase hexapeptide repeat family. In terms of assembly, homotrimer. Mg(2+) is required as a cofactor.

It localises to the cytoplasm. It catalyses the reaction alpha-D-glucosamine 1-phosphate + acetyl-CoA = N-acetyl-alpha-D-glucosamine 1-phosphate + CoA + H(+). The enzyme catalyses N-acetyl-alpha-D-glucosamine 1-phosphate + UTP + H(+) = UDP-N-acetyl-alpha-D-glucosamine + diphosphate. It participates in nucleotide-sugar biosynthesis; UDP-N-acetyl-alpha-D-glucosamine biosynthesis; N-acetyl-alpha-D-glucosamine 1-phosphate from alpha-D-glucosamine 6-phosphate (route II): step 2/2. It functions in the pathway nucleotide-sugar biosynthesis; UDP-N-acetyl-alpha-D-glucosamine biosynthesis; UDP-N-acetyl-alpha-D-glucosamine from N-acetyl-alpha-D-glucosamine 1-phosphate: step 1/1. The protein operates within bacterial outer membrane biogenesis; LPS lipid A biosynthesis. In terms of biological role, catalyzes the last two sequential reactions in the de novo biosynthetic pathway for UDP-N-acetylglucosamine (UDP-GlcNAc). The C-terminal domain catalyzes the transfer of acetyl group from acetyl coenzyme A to glucosamine-1-phosphate (GlcN-1-P) to produce N-acetylglucosamine-1-phosphate (GlcNAc-1-P), which is converted into UDP-GlcNAc by the transfer of uridine 5-monophosphate (from uridine 5-triphosphate), a reaction catalyzed by the N-terminal domain. This Neisseria gonorrhoeae protein is Bifunctional protein GlmU.